The chain runs to 101 residues: uncharacterized protein (101 aa).

Residues Val77–Ile99 traverse the membrane as a helical segment.

The protein resides in the membrane. This is an uncharacterized protein from Acanthamoeba polyphaga mimivirus (APMV).